We begin with the raw amino-acid sequence, 170 residues long: Calcineurin subunit B type 2 (170 aa).

The N-myristoyl glycine moiety is linked to residue Gly-2. EF-hand domains follow at residues 18–46, 50–85, 87–122, and 128–163; these read DEIK…FTSM, QENP…FSVR, DEEQ…MVGD, and QLQQ…LEIH. Positions 63, 65, 67, 69, 74, 100, 102, 104, 106, and 111 each coordinate Ca(2+). Positions 131–136 are calcineurin A binding; that stretch reads QLVDKT. The Ca(2+) site is built by Asp-141, Asp-143, Asp-145, Lys-147, and Glu-152.

Belongs to the calcineurin regulatory subunit family. As to quaternary structure, forms a complex composed of a calmodulin-dependent catalytic subunit (also known as calcineurin A) and a regulatory Ca(2+)-binding subunit (also known as calcineurin B). There are three catalytic subunits, each encoded by a separate gene (PPP3CA, PPP3CB, and PPP3CC) and two regulatory subunits which are also encoded by separate genes (PPP3R1 and PPP3R2). Interacts with SPATA33 (via PQIIIT motif).

It localises to the mitochondrion. Functionally, regulatory subunit of calcineurin, a calcium-dependent, calmodulin stimulated protein phosphatase. Confers calcium sensitivity. The chain is Calcineurin subunit B type 2 (PPP3R2) from Bos taurus (Bovine).